A 562-amino-acid polypeptide reads, in one-letter code: NAD-dependent malic enzyme (562 aa).

The active-site Proton donor is the Tyr-101. Position 154 (Arg-154) interacts with NAD(+). Lys-172 functions as the Proton acceptor in the catalytic mechanism. Positions 243, 244, and 267 each coordinate a divalent metal cation. NAD(+)-binding residues include Asp-267 and Asn-415.

Belongs to the malic enzymes family. In terms of assembly, homotetramer. Mg(2+) is required as a cofactor. Requires Mn(2+) as cofactor.

The enzyme catalyses (S)-malate + NAD(+) = pyruvate + CO2 + NADH. The catalysed reaction is oxaloacetate + H(+) = pyruvate + CO2. The protein is NAD-dependent malic enzyme of Vibrio parahaemolyticus serotype O3:K6 (strain RIMD 2210633).